The primary structure comprises 275 residues: NifU-like protein 5, mitochondrial (275 aa).

A mitochondrion-targeting transit peptide spans 1-61 (MKGLTRLLNS…TNASRNCSRS (61 aa)).

This sequence belongs to the NifU family.

Its subcellular location is the mitochondrion. Functionally, molecular scaffold for [Fe-S] cluster assembly of mitochondrial iron-sulfur proteins. This Arabidopsis thaliana (Mouse-ear cress) protein is NifU-like protein 5, mitochondrial (NIFU5).